Reading from the N-terminus, the 92-residue chain is Small ribosomal subunit protein uS19 (92 aa).

The protein belongs to the universal ribosomal protein uS19 family.

Functionally, protein S19 forms a complex with S13 that binds strongly to the 16S ribosomal RNA. The chain is Small ribosomal subunit protein uS19 from Psychromonas ingrahamii (strain DSM 17664 / CCUG 51855 / 37).